Here is a 185-residue protein sequence, read N- to C-terminus: Putative manganese efflux pump MntP (185 aa).

6 consecutive transmembrane segments (helical) span residues 6 to 26 (IFII…ACGL), 41 to 61 (FHFG…GLTV), 65 to 85 (VETY…GKMI), 107 to 127 (LVFL…SFSI), 132 to 152 (IAFP…FGLW), and 164 to 184 (SHIA…KLLL).

It belongs to the MntP (TC 9.B.29) family.

It localises to the cell inner membrane. In terms of biological role, probably functions as a manganese efflux pump. The chain is Putative manganese efflux pump MntP from Maridesulfovibrio salexigens (strain ATCC 14822 / DSM 2638 / NCIMB 8403 / VKM B-1763) (Desulfovibrio salexigens).